An 81-amino-acid polypeptide reads, in one-letter code: Small ribosomal subunit protein bS20 (81 aa).

It belongs to the bacterial ribosomal protein bS20 family.

In terms of biological role, binds directly to 16S ribosomal RNA. The chain is Small ribosomal subunit protein bS20 from Mycoplasma mycoides subsp. mycoides SC (strain CCUG 32753 / NCTC 10114 / PG1).